A 655-amino-acid chain; its full sequence is Putative phagocytic receptor 1c (655 aa).

Residues 1-20 (MLNIIVVLLLLFFSNNVIDS) form the signal peptide. The span at 146–173 (SNSKSSEITSPPSSPSSSSSSSSSPSSS) shows a compositional bias: low complexity. The segment at 146–185 (SNSKSSEITSPPSSPSSSSSSSSSPSSSIEEEDDDDTEND) is disordered. Residues 174–183 (IEEEDDDDTE) are compositionally biased toward acidic residues. The next 9 helical transmembrane spans lie at 300 to 320 (IDII…AIIL), 359 to 379 (FSII…LMVF), 387 to 407 (IATP…TGIF), 428 to 448 (SVIT…IGYF), 461 to 481 (IGTV…CSLL), 518 to 538 (MILG…FFLS), 550 to 570 (LSFA…NMII), 587 to 607 (LLGP…FGIT), and 619 to 639 (FMFS…IGFL).

Belongs to the nonaspanin (TM9SF) (TC 9.A.2) family.

It localises to the membrane. The protein is Putative phagocytic receptor 1c (phg1c) of Dictyostelium discoideum (Social amoeba).